The following is a 179-amino-acid chain: Large ribosomal subunit protein uL6 (179 aa).

The protein belongs to the universal ribosomal protein uL6 family. Part of the 50S ribosomal subunit.

In terms of biological role, this protein binds to the 23S rRNA, and is important in its secondary structure. It is located near the subunit interface in the base of the L7/L12 stalk, and near the tRNA binding site of the peptidyltransferase center. In Leptospira biflexa serovar Patoc (strain Patoc 1 / ATCC 23582 / Paris), this protein is Large ribosomal subunit protein uL6.